A 347-amino-acid polypeptide reads, in one-letter code: NADH-quinone oxidoreductase subunit H (347 aa).

8 helical membrane-spanning segments follow: residues 25–45 (ILFM…VAAM), 95–115 (FMFT…FAII), 128–148 (IGIL…LFGG), 168–188 (ISYE…TGSF), 200–220 (GWYI…GVAV), 251–271 (FFIG…CLFF), 284–304 (FIPP…MFVL), and 324–344 (VCLP…LIFS).

Belongs to the complex I subunit 1 family. In terms of assembly, NDH-1 is composed of 14 different subunits. Subunits NuoA, H, J, K, L, M, N constitute the membrane sector of the complex.

The protein localises to the cell inner membrane. It catalyses the reaction a quinone + NADH + 5 H(+)(in) = a quinol + NAD(+) + 4 H(+)(out). Functionally, NDH-1 shuttles electrons from NADH, via FMN and iron-sulfur (Fe-S) centers, to quinones in the respiratory chain. The immediate electron acceptor for the enzyme in this species is believed to be ubiquinone. Couples the redox reaction to proton translocation (for every two electrons transferred, four hydrogen ions are translocated across the cytoplasmic membrane), and thus conserves the redox energy in a proton gradient. This subunit may bind ubiquinone. In Psychrobacter cryohalolentis (strain ATCC BAA-1226 / DSM 17306 / VKM B-2378 / K5), this protein is NADH-quinone oxidoreductase subunit H.